We begin with the raw amino-acid sequence, 334 residues long: Probable quinone oxidoreductase (334 aa).

The protein belongs to the zinc-containing alcohol dehydrogenase family. Quinone oxidoreductase subfamily.

The enzyme catalyses 2 a quinone + NADPH + H(+) = 2 a 1,4-benzosemiquinone + NADP(+). The polypeptide is Probable quinone oxidoreductase (ZTA1) (Saccharomyces cerevisiae (strain ATCC 204508 / S288c) (Baker's yeast)).